The chain runs to 422 residues: Serine--tRNA ligase (422 aa).

229–231 lines the L-serine pocket; the sequence is TAE. Residue 260-262 coordinates ATP; the sequence is RKE. Glutamate 283 lines the L-serine pocket. 347 to 350 contacts ATP; the sequence is EISS. L-serine is bound at residue serine 383.

It belongs to the class-II aminoacyl-tRNA synthetase family. Type-1 seryl-tRNA synthetase subfamily. As to quaternary structure, homodimer. The tRNA molecule binds across the dimer.

The protein resides in the cytoplasm. It catalyses the reaction tRNA(Ser) + L-serine + ATP = L-seryl-tRNA(Ser) + AMP + diphosphate + H(+). The enzyme catalyses tRNA(Sec) + L-serine + ATP = L-seryl-tRNA(Sec) + AMP + diphosphate + H(+). Its pathway is aminoacyl-tRNA biosynthesis; selenocysteinyl-tRNA(Sec) biosynthesis; L-seryl-tRNA(Sec) from L-serine and tRNA(Sec): step 1/1. Its function is as follows. Catalyzes the attachment of serine to tRNA(Ser). Is also able to aminoacylate tRNA(Sec) with serine, to form the misacylated tRNA L-seryl-tRNA(Sec), which will be further converted into selenocysteinyl-tRNA(Sec). The sequence is that of Serine--tRNA ligase from Geobacter sulfurreducens (strain ATCC 51573 / DSM 12127 / PCA).